The following is a 318-amino-acid chain: Acetyl-coenzyme A carboxylase carboxyl transferase subunit alpha (318 aa).

Positions 31 to 292 (DLIKEVSALE…KDAILRQLEL (262 aa)) constitute a CoA carboxyltransferase C-terminal domain.

It belongs to the AccA family. In terms of assembly, acetyl-CoA carboxylase is a heterohexamer composed of biotin carboxyl carrier protein (AccB), biotin carboxylase (AccC) and two subunits each of ACCase subunit alpha (AccA) and ACCase subunit beta (AccD).

It localises to the cytoplasm. The enzyme catalyses N(6)-carboxybiotinyl-L-lysyl-[protein] + acetyl-CoA = N(6)-biotinyl-L-lysyl-[protein] + malonyl-CoA. It participates in lipid metabolism; malonyl-CoA biosynthesis; malonyl-CoA from acetyl-CoA: step 1/1. In terms of biological role, component of the acetyl coenzyme A carboxylase (ACC) complex. First, biotin carboxylase catalyzes the carboxylation of biotin on its carrier protein (BCCP) and then the CO(2) group is transferred by the carboxyltransferase to acetyl-CoA to form malonyl-CoA. In Hydrogenovibrio crunogenus (strain DSM 25203 / XCL-2) (Thiomicrospira crunogena), this protein is Acetyl-coenzyme A carboxylase carboxyl transferase subunit alpha.